We begin with the raw amino-acid sequence, 206 residues long: Large ribosomal subunit protein uL4 (206 aa).

Positions 43 to 78 are disordered; that stretch reads ARSGNRKQKDREEVHHTTKKPWRQKGTGRARAGMSS. Residues 49 to 58 show a composition bias toward basic and acidic residues; the sequence is KQKDREEVHH. Positions 59–70 are enriched in basic residues; it reads TTKKPWRQKGTG.

This sequence belongs to the universal ribosomal protein uL4 family. Part of the 50S ribosomal subunit.

One of the primary rRNA binding proteins, this protein initially binds near the 5'-end of the 23S rRNA. It is important during the early stages of 50S assembly. It makes multiple contacts with different domains of the 23S rRNA in the assembled 50S subunit and ribosome. In terms of biological role, forms part of the polypeptide exit tunnel. This Janthinobacterium sp. (strain Marseille) (Minibacterium massiliensis) protein is Large ribosomal subunit protein uL4.